Here is a 214-residue protein sequence, read N- to C-terminus: Ceramide-1-phosphate transfer protein (214 aa).

An N-acylsphingoid base 1-phosphate-binding residues include Asp56, Lys60, Arg106, Arg110, and His150.

It belongs to the GLTP family.

It is found in the cytoplasm. The protein resides in the cytosol. It localises to the golgi apparatus. Its subcellular location is the trans-Golgi network membrane. The protein localises to the cell membrane. It is found in the endosome membrane. The protein resides in the nucleus outer membrane. The catalysed reaction is N-(hexadecanoyl)-sphing-4-enine-1-phosphate(in) = N-(hexadecanoyl)-sphing-4-enine-1-phosphate(out). It catalyses the reaction N-(9Z-octadecenoyl)-sphing-4-enine-1-phosphate(in) = N-(9Z-octadecenoyl)-sphing-4-enine-1-phosphate(out). Mediates the intracellular transfer of ceramide-1-phosphate (C1P) between organelle membranes and the cell membrane. Required for normal structure of the Golgi stacks. Can bind phosphoceramides with a variety of aliphatic chains, but has a preference for lipids with saturated C16:0 or monounsaturated C18:1 aliphatic chains, and is inefficient with phosphoceramides containing lignoceryl (C24:0). Plays a role in the regulation of the cellular levels of ceramide-1-phosphate, and thereby contributes to the regulation of phospholipase PLA2G4A activity and the release of arachidonic acid. Has no activity with galactosylceramide, lactosylceramide, sphingomyelin, phosphatidylcholine, phosphatidic acid and ceramide. C1P transfer is stimulated by phosphatidylserine in C1P source vesicles. Regulates autophagy, inflammasome mediated IL1B and IL18 processing, and pyroptosis, but not apoptosis. The sequence is that of Ceramide-1-phosphate transfer protein (CPTP) from Bos taurus (Bovine).